Reading from the N-terminus, the 557-residue chain is DNA ligase (557 aa).

E251 contacts ATP. K253 (N6-AMP-lysine intermediate) is an active-site residue. ATP-binding residues include R258, R273, E303, F342, R418, and K424.

Belongs to the ATP-dependent DNA ligase family. Mg(2+) serves as cofactor.

The enzyme catalyses ATP + (deoxyribonucleotide)n-3'-hydroxyl + 5'-phospho-(deoxyribonucleotide)m = (deoxyribonucleotide)n+m + AMP + diphosphate.. In terms of biological role, DNA ligase that seals nicks in double-stranded DNA during DNA replication, DNA recombination and DNA repair. This chain is DNA ligase, found in Methanosphaera stadtmanae (strain ATCC 43021 / DSM 3091 / JCM 11832 / MCB-3).